The primary structure comprises 481 residues: Glutamyl-tRNA(Gln) amidotransferase subunit A (481 aa).

Active-site charge relay system residues include Lys-77 and Ser-151. Ser-175 (acyl-ester intermediate) is an active-site residue.

This sequence belongs to the amidase family. GatA subfamily. As to quaternary structure, heterotrimer of A, B and C subunits.

It catalyses the reaction L-glutamyl-tRNA(Gln) + L-glutamine + ATP + H2O = L-glutaminyl-tRNA(Gln) + L-glutamate + ADP + phosphate + H(+). Its function is as follows. Allows the formation of correctly charged Gln-tRNA(Gln) through the transamidation of misacylated Glu-tRNA(Gln) in organisms which lack glutaminyl-tRNA synthetase. The reaction takes place in the presence of glutamine and ATP through an activated gamma-phospho-Glu-tRNA(Gln). This Rubrobacter xylanophilus (strain DSM 9941 / JCM 11954 / NBRC 16129 / PRD-1) protein is Glutamyl-tRNA(Gln) amidotransferase subunit A.